Here is a 283-residue protein sequence, read N- to C-terminus: Galactooligosaccharides transport system permease protein GanQ (283 aa).

The next 6 helical transmembrane spans lie at 13–33, 82–102, 115–135, 137–157, 188–208, and 248–268; these read LLFSYLLLAFMAVIIVYPLLW, ISLFTMAGSLLCVTFTAYAFS, LFLLLQMIPQFSALIALFVLA, ILGMINSHWLLILLYIGGLIP, IFFQIILPLSKPMAAVVAMNG, and TTFAAGALLISIPVAVIFIML. Residues 76-268 enclose the ABC transmembrane type-1 domain; sequence YVNSMKISLF…IPVAVIFIML (193 aa).

The protein belongs to the binding-protein-dependent transport system permease family. The complex is composed of two ATP-binding proteins (MsmX), two transmembrane proteins (GanP and GanQ) and a solute-binding protein (GanS).

The protein resides in the cell membrane. Involved in galactan degradation. Part of the ABC transporter complex GanPQS involved in the uptake of galactooligosaccharides. Responsible for the translocation of the substrate across the membrane. This chain is Galactooligosaccharides transport system permease protein GanQ (ganQ), found in Bacillus subtilis (strain 168).